The following is a 714-amino-acid chain: Fatty acid oxidation complex subunit alpha (714 aa).

Positions 1–190 are enoyl-CoA hydratase; sequence MEMASAFTLN…KLGLVDDVVP (190 aa). Positions 306–714 are 3-hydroxyacyl-CoA dehydrogenase; the sequence is APLNSVGILG…FWKTTATDLQ (409 aa).

The protein in the N-terminal section; belongs to the enoyl-CoA hydratase/isomerase family. In the central section; belongs to the 3-hydroxyacyl-CoA dehydrogenase family. As to quaternary structure, heterotetramer of two alpha chains (FadJ) and two beta chains (FadI).

The protein localises to the cytoplasm. It catalyses the reaction a (3S)-3-hydroxyacyl-CoA = a (2E)-enoyl-CoA + H2O. The catalysed reaction is a 4-saturated-(3S)-3-hydroxyacyl-CoA = a (3E)-enoyl-CoA + H2O. It carries out the reaction a (3S)-3-hydroxyacyl-CoA + NAD(+) = a 3-oxoacyl-CoA + NADH + H(+). The enzyme catalyses (3S)-3-hydroxybutanoyl-CoA = (3R)-3-hydroxybutanoyl-CoA. It functions in the pathway lipid metabolism; fatty acid beta-oxidation. In terms of biological role, catalyzes the formation of a hydroxyacyl-CoA by addition of water on enoyl-CoA. Also exhibits 3-hydroxyacyl-CoA epimerase and 3-hydroxyacyl-CoA dehydrogenase activities. The polypeptide is Fatty acid oxidation complex subunit alpha (Shigella flexneri).